Reading from the N-terminus, the 1167-residue chain is White collar 1 protein (1167 aa).

2 disordered regions span residues 1 to 91 (MNNN…MSGG) and 307 to 355 (STPA…GASQ). The segment covering 21-57 (QHQQQQQQQQQQQQQQQQQQQQQQQQQQQQHQHQQQQ) has biased composition (low complexity). Polar residues-rich tracts occupy residues 70–91 (TPPT…MSGG) and 307–325 (STPA…TQTI). A compositionally biased stretch (low complexity) spans 335 to 348 (VTNAPTPAPFTSTP). In terms of domain architecture, PAS 1 spans 381–452 (KLKLGAVDMS…KREFVENNAV (72 aa)). Position 428 is an S-4a-FMN cysteine (Cys-428). Positions 469–508 (LINYRKGGKPFLNLLTMIPIPWDTEEIRYFIGFQIDLVEC) constitute a PAC 1 domain. The PAS 2 domain maps to 574–644 (KQSWDKMLLE…RELKEAQQHT (71 aa)). Residues 650-691 (FRIRRKNSGYTWFESHGTLFNEQGKGRKCIILVGRKRPVFAL) enclose the PAC 2 domain. The PAS 3 domain maps to 693–763 (RKDLELNGGI…RTIEKARKGK (71 aa)). A compositionally biased stretch (low complexity) spans 849-861 (MSKSGSSDSTGAM). 4 disordered regions span residues 849–872 (MSKS…GPGQ), 918–952 (KKKR…PSGN), 966–1047 (QTGR…TGST), and 1060–1167 (VNAL…GLSV). The GATA-type zinc finger occupies 934–959 (CANCHTRNTPEWRRGPSGNRDLCNSC). The span at 968–977 (GRVSPRTSSR) shows a compositional bias: polar residues. Positions 986-995 (KKSNSPSHSS) are enriched in low complexity. The span at 1004–1033 (DSPSTTTATKNSPSLRGSSTTAPGTITTDS) shows a compositional bias: polar residues. 2 stretches are compositionally biased toward low complexity: residues 1036–1047 (AVASSASGTGST) and 1104–1128 (QHQQ…QQHQ).

As to quaternary structure, heterodimer of wc-1 and wc-2. Post-translationally, FMN binds covalently to cysteine after exposure to blue light and is reversed in the dark.

It is found in the nucleus. Functionally, may function as a transcription factor involved in light regulation. Binds and affects blue light regulation of the al-3 gene. Wc-1 and wc-2 proteins interact via homologous PAS domains, bind to promoters of light regulated genes such as frq, and activate transcription. The polypeptide is White collar 1 protein (wc-1) (Neurospora crassa (strain ATCC 24698 / 74-OR23-1A / CBS 708.71 / DSM 1257 / FGSC 987)).